A 31-amino-acid polypeptide reads, in one-letter code: SEESNLCDLLRDYDKPAQEVIAEMTDGGVDR.

Cys-7 is a Zn(2+) binding site.

Belongs to the zinc-containing alcohol dehydrogenase family. Class-P subfamily. As to quaternary structure, homodimer. Zn(2+) is required as a cofactor.

It localises to the cytoplasm. It carries out the reaction a primary alcohol + NAD(+) = an aldehyde + NADH + H(+). It catalyses the reaction a secondary alcohol + NAD(+) = a ketone + NADH + H(+). This chain is Alcohol dehydrogenase 1, found in Catharanthus roseus (Madagascar periwinkle).